The sequence spans 147 residues: Proteinase inhibitor type-2 T (147 aa).

The signal sequence occupies residues 1–25 (MAVHKEVSFVAYLLIVLGMFLYVDA). Repeat copies occupy residues 25–82 (ALGC…PKNP) and 83–142 (KACP…EPKP). 8 cysteine pairs are disulfide-bonded: Cys28/Cys116, Cys32/Cys112, Cys40/Cys122, Cys52/Cys89, Cys55/Cys73, Cys56/Cys85, Cys62/Cys98, and Cys115/Cys133.

The protein belongs to the protease inhibitor I20 (potato type II proteinase inhibitor) family.

Functionally, inhibitor of trypsin and chymotrypsin. This chain is Proteinase inhibitor type-2 T (PIN2T), found in Solanum tuberosum (Potato).